The sequence spans 440 residues: Diaminopimelate decarboxylase (440 aa).

K61 is modified (N6-(pyridoxal phosphate)lysine). Residues G234 and 275-278 (EPGR) contribute to the pyridoxal 5'-phosphate site. Residues R278, R314, and Y318 each coordinate substrate. C348 functions as the Proton donor in the catalytic mechanism. Substrate-binding residues include E349 and Y384. Y384 contributes to the pyridoxal 5'-phosphate binding site. Over residues 421 to 431 (LAPELEPGPAL) the composition is skewed to low complexity. The disordered stretch occupies residues 421-440 (LAPELEPGPALSPRPSRDPR).

Belongs to the Orn/Lys/Arg decarboxylase class-II family. LysA subfamily. Homodimer. Pyridoxal 5'-phosphate serves as cofactor.

The enzyme catalyses meso-2,6-diaminopimelate + H(+) = L-lysine + CO2. Its pathway is amino-acid biosynthesis; L-lysine biosynthesis via DAP pathway; L-lysine from DL-2,6-diaminopimelate: step 1/1. Its function is as follows. Specifically catalyzes the decarboxylation of meso-diaminopimelate (meso-DAP) to L-lysine. The chain is Diaminopimelate decarboxylase from Streptomyces coelicolor (strain ATCC BAA-471 / A3(2) / M145).